We begin with the raw amino-acid sequence, 400 residues long: Renin (400 aa).

The N-terminal stretch at 1 to 17 (MPLWGLLLALWGCSTFS) is a signal peptide. Residues 18–59 (LPADTAAFRRIFLKKMPSVRESLKERGVDMAQLGAEWSQLTK) constitute a propeptide, activation peptide. N65 carries N-linked (GlcNAc...) asparagine glycosylation. One can recognise a Peptidase A1 domain in the interval 80–397 (YYGEIGIGTP…DRRNNRIGFA (318 aa)). D98 is a catalytic residue. C111 and C118 are oxidised to a cystine. A glycan (N-linked (GlcNAc...) asparagine) is linked at N135. C277 and C281 are joined by a disulfide. D286 is an active-site residue. A disulfide bridge connects residues C320 and C356. N353 is a glycosylation site (N-linked (GlcNAc...) asparagine).

Belongs to the peptidase A1 family. As to quaternary structure, interacts with ATP6AP2. As to expression, kidney.

It is found in the secreted. The protein resides in the membrane. It catalyses the reaction Cleavage of Leu-|-Xaa bond in angiotensinogen to generate angiotensin I.. Interaction with ATP6AP2 results in a 5-fold increased efficiency in angiotensinogen processing. In terms of biological role, renin is a highly specific endopeptidase, whose only known function is to generate angiotensin I from angiotensinogen in the plasma, initiating a cascade of reactions that produce an elevation of blood pressure and increased sodium retention by the kidney. This chain is Renin (REN), found in Ovis aries (Sheep).